Consider the following 361-residue polypeptide: Phosphoserine aminotransferase (361 aa).

2 residues coordinate L-glutamate: serine 9 and arginine 42. Pyridoxal 5'-phosphate-binding positions include 76 to 77 (AR), tryptophan 103, threonine 153, aspartate 173, and glutamine 196. Lysine 197 is subject to N6-(pyridoxal phosphate)lysine. Residue 238–239 (NT) coordinates pyridoxal 5'-phosphate.

It belongs to the class-V pyridoxal-phosphate-dependent aminotransferase family. SerC subfamily. As to quaternary structure, homodimer. It depends on pyridoxal 5'-phosphate as a cofactor.

Its subcellular location is the cytoplasm. The catalysed reaction is O-phospho-L-serine + 2-oxoglutarate = 3-phosphooxypyruvate + L-glutamate. It carries out the reaction 4-(phosphooxy)-L-threonine + 2-oxoglutarate = (R)-3-hydroxy-2-oxo-4-phosphooxybutanoate + L-glutamate. It functions in the pathway amino-acid biosynthesis; L-serine biosynthesis; L-serine from 3-phospho-D-glycerate: step 2/3. Its pathway is cofactor biosynthesis; pyridoxine 5'-phosphate biosynthesis; pyridoxine 5'-phosphate from D-erythrose 4-phosphate: step 3/5. In terms of biological role, catalyzes the reversible conversion of 3-phosphohydroxypyruvate to phosphoserine and of 3-hydroxy-2-oxo-4-phosphonooxybutanoate to phosphohydroxythreonine. This Wigglesworthia glossinidia brevipalpis protein is Phosphoserine aminotransferase.